The following is a 388-amino-acid chain: Chorismate synthase (388 aa).

R39 and R45 together coordinate NADP(+). FMN is bound by residues 130-132, 251-252, A296, 311-315, and R337; these read RSS, NA, and KPIPT.

The protein belongs to the chorismate synthase family. In terms of assembly, homotetramer. The cofactor is FMNH2.

The enzyme catalyses 5-O-(1-carboxyvinyl)-3-phosphoshikimate = chorismate + phosphate. It functions in the pathway metabolic intermediate biosynthesis; chorismate biosynthesis; chorismate from D-erythrose 4-phosphate and phosphoenolpyruvate: step 7/7. Catalyzes the anti-1,4-elimination of the C-3 phosphate and the C-6 proR hydrogen from 5-enolpyruvylshikimate-3-phosphate (EPSP) to yield chorismate, which is the branch point compound that serves as the starting substrate for the three terminal pathways of aromatic amino acid biosynthesis. This reaction introduces a second double bond into the aromatic ring system. The protein is Chorismate synthase of Streptococcus equi subsp. zooepidemicus (strain MGCS10565).